The primary structure comprises 345 residues: Methionine import ATP-binding protein MetN 2 (345 aa).

The region spanning Ile-4 to Ile-243 is the ABC transporter domain. Gly-40 to Ser-47 contributes to the ATP binding site.

It belongs to the ABC transporter superfamily. Methionine importer (TC 3.A.1.24) family. As to quaternary structure, the complex is composed of two ATP-binding proteins (MetN), two transmembrane proteins (MetI) and a solute-binding protein (MetQ).

Its subcellular location is the cell membrane. It carries out the reaction L-methionine(out) + ATP + H2O = L-methionine(in) + ADP + phosphate + H(+). It catalyses the reaction D-methionine(out) + ATP + H2O = D-methionine(in) + ADP + phosphate + H(+). Part of the ABC transporter complex MetNIQ involved in methionine import. Responsible for energy coupling to the transport system. In Enterococcus faecalis (strain ATCC 700802 / V583), this protein is Methionine import ATP-binding protein MetN 2.